Reading from the N-terminus, the 622-residue chain is MLEQINSPYDLKKLDIKDLPRLSEEIRQFIVEKVSKTGGHLASNLGIVELTLALHYVFNSPVDKIIWDVGHQCYVHKMITGRRDKFDTLRQFNGLSGYTKRTESIHDIFGAGHSSTSLSAALGIATARDLKGEKYHVIAVIGDGALTGGMALEALNNIGRSRKDVIVILNHNEMSISENVGSLSLYLSKLRTDPTYNKVKQEIDNLLNIIPPIGKSLHKYIEKIKDSIKQLVVPGMFFEELGFTYLGPIDGHNVEELIEVLERSKKMKGPLLIHVVTKKGKGYMFAEKRPDKFHSAAPFDIETGKFVGEGKDSYSDVFGKTLAEMALKDEKIVAITAAMPEGTGLIHFAKLIPDRFFDVGIAEQHATTFAAGLAVEGYKPYFAVYSTFLQRAYDQVIHDVCIQKLPVVFAVDRAGIVGEDGETHQGVFDISFLRAIPNIAIMSPKDANELVEMVKLSRNLDFPVAIRYPRGKAGEYDISRKPSFPLGKGEVLLEGEKIAVFALGRMVSKSIDAAEILKGHGINPFVVNLRFVKPLDEELILEISNKVDLVVTVEDNVIAGGVGSAILELLNDKKVYRPVLRLGFPDKFIEHGDVESLFKKYGLDSQSIADTILQRYKEMRGS.

Thiamine diphosphate is bound by residues histidine 71 and 112-114; that span reads GHS. Mg(2+) is bound at residue aspartate 143. Thiamine diphosphate is bound by residues 144-145, asparagine 172, tyrosine 283, and glutamate 363; that span reads GA. Asparagine 172 is a binding site for Mg(2+).

The protein belongs to the transketolase family. DXPS subfamily. In terms of assembly, homodimer. Mg(2+) serves as cofactor. The cofactor is thiamine diphosphate.

The catalysed reaction is D-glyceraldehyde 3-phosphate + pyruvate + H(+) = 1-deoxy-D-xylulose 5-phosphate + CO2. The protein operates within metabolic intermediate biosynthesis; 1-deoxy-D-xylulose 5-phosphate biosynthesis; 1-deoxy-D-xylulose 5-phosphate from D-glyceraldehyde 3-phosphate and pyruvate: step 1/1. Catalyzes the acyloin condensation reaction between C atoms 2 and 3 of pyruvate and glyceraldehyde 3-phosphate to yield 1-deoxy-D-xylulose-5-phosphate (DXP). The sequence is that of 1-deoxy-D-xylulose-5-phosphate synthase from Caldanaerobacter subterraneus subsp. tengcongensis (strain DSM 15242 / JCM 11007 / NBRC 100824 / MB4) (Thermoanaerobacter tengcongensis).